The following is a 101-amino-acid chain: Small ribosomal subunit protein uS14 (101 aa).

This sequence belongs to the universal ribosomal protein uS14 family. As to quaternary structure, part of the 30S ribosomal subunit. Contacts proteins S3 and S10.

Binds 16S rRNA, required for the assembly of 30S particles and may also be responsible for determining the conformation of the 16S rRNA at the A site. This Synechococcus sp. (strain JA-3-3Ab) (Cyanobacteria bacterium Yellowstone A-Prime) protein is Small ribosomal subunit protein uS14.